The primary structure comprises 3779 residues: Protein DDB_G0268328 (3779 aa).

12 disordered regions span residues 24–56, 1001–1028, 1137–1165, 1513–1538, 1656–1690, 2027–2054, 2144–2184, 2280–2325, 2508–2527, 2720–2748, 2975–3030, and 3427–3450; these read RQIKSQNKLQNKSQNNGNNNNNKDNNNINKDGS, HEDEEEEGDGDNSNNSNSQDSDGDDDDD, QDSTLPKRKQHGYYHQQQQQQQYHQQQQQ, PTNSIYNNNNNNNNNNNNTNSSSLLS, ETTVLEKETKETKDNNLENNNNNTNNSNNNNNNKE, SNSSNNNNNNNDGSTTSTTTLNRSDSNN, NNNN…NNSS, ISTT…NEQQ, QINNNNNNNEKEEEEEREEG, DGNNNNNNNNNQNNNNQNNNNNQNNNDSS, ESND…DSIK, and QSNTLNGTGGGGGNGGGNNGSGKL. Composition is skewed to low complexity over residues 26–56, 1011–1020, 1149–1165, and 1515–1538; these read IKSQNKLQNKSQNNGNNNNNKDNNNINKDGS, DNSNNSNSQD, YYHQQQQQQQYHQQQQQ, and NSIYNNNNNNNNNNNNTNSSSLLS. Basic and acidic residues predominate over residues 1656–1671; that stretch reads ETTVLEKETKETKDNN. Positions 1672 to 1687 are enriched in low complexity; it reads LENNNNNTNNSNNNNN. Composition is skewed to low complexity over residues 2144–2182 and 2285–2322; these read NNNNNNNNNNNNNNNNNNNNNNNNNNNNNNNNNNNNNNN and NNNNNNNNNNNNNNNNNNNNNNNNNNNNNNNNNNNNNN. 2 stretches are compositionally biased toward low complexity: residues 2722-2745 and 3015-3030; these read NNNNNNNNNQNNNNQNNNNNQNNN and SVNNNNNNNSNSDSIK. Over residues 3433–3446 the composition is skewed to gly residues; sequence GTGGGGGNGGGNNG.

This is Protein DDB_G0268328 from Dictyostelium discoideum (Social amoeba).